Consider the following 376-residue polypeptide: MEVPRLDHALNSPTSPCEEVIKNLSLEAIQLCDRDGNKSQDSGIAEMEELPVPRNIKISNITCDSFKISWEMDSKSKDRITHYFIDLNKKENKNSNKFKHKDVPTKLVAKAVPLPMTVRGHWFLSPRTEYTVAVQTASKQVDGDYVVSEWSEIIEFCTADYSKVHLTQLLEKAEVIAGRMLKFSVFYRNQHKEYFDYIREHHGNAMQPSVKDNSGSHGSPISGKLEGIFFSCSTEFNTGKPPQDSPYGRYRFEIAAEKLFNPNTNLYFGDFYCMYTAYHYVILVIAPVGSPGDEFCKQRLPQLNSQDNKFLTCREEDGMLVYHHAQDVILEVIYTDPVGLSLGTVAEITGHQLMSLSTANAKKDPSCKTCNISVGR.

Phosphoserine occurs at positions 12 and 15. N-linked (GlcNAc...) asparagine glycosylation is present at asparagine 23. Serine 25 carries the post-translational modification Phosphoserine. Residue asparagine 37 is glycosylated (N-linked (GlcNAc...) asparagine). The Fibronectin type-III domain maps to 52–161; it reads VPRNIKISNI…EIIEFCTADY (110 aa).

It belongs to the PHYHIP family.

May play a role in the development of the central system. The protein is Phytanoyl-CoA hydroxylase interacting protein-like (PHYHIPL) of Bos taurus (Bovine).